A 170-amino-acid chain; its full sequence is MFLTSPFESCIVLSSLIAGLLFSLSTGFVGILGVFASLFETELSVSPKRLSLSSLSWPKTFWALLSSVEGVSWESSLFACIVGCCFAVTVIASLSASRVFGTVASSFRDSSCCCDSSPAVSVLATPATAALALLSLLLSLPCWSTSTEAFTVDPSPSVFSMLANRITIGL.

Over 1–15 (MFLTSPFESCIVLSS) the chain is Cytoplasmic. Residues 16-36 (LIAGLLFSLSTGFVGILGVFA) form a helical membrane-spanning segment. Residues 37–76 (SLFETELSVSPKRLSLSSLSWPKTFWALLSSVEGVSWESS) lie on the Extracellular side of the membrane. Residues 77–97 (LFACIVGCCFAVTVIASLSAS) form a helical membrane-spanning segment. The Cytoplasmic portion of the chain corresponds to 98–119 (RVFGTVASSFRDSSCCCDSSPA). The chain crosses the membrane as a helical span at residues 120–140 (VSVLATPATAALALLSLLLSL). Topologically, residues 141–170 (PCWSTSTEAFTVDPSPSVFSMLANRITIGL) are extracellular.

The protein resides in the membrane. This is an uncharacterized protein from Saccharomyces cerevisiae (strain ATCC 204508 / S288c) (Baker's yeast).